Consider the following 644-residue polypeptide: Heat shock protein SSC3, mitochondrial (644 aa).

Belongs to the heat shock protein 70 family.

It is found in the mitochondrion matrix. Its subcellular location is the mitochondrion nucleoid. In terms of biological role, plays a role in facilitating the assembly of some protein complexes inside the mitochondria. It may initiate the events that lead to refolding of imported precursors in the matrix space. The chain is Heat shock protein SSC3, mitochondrial (ECM10) from Saccharomyces cerevisiae (strain ATCC 204508 / S288c) (Baker's yeast).